A 66-amino-acid polypeptide reads, in one-letter code: MKATFQVPSITCNHCVDKIEKFVGEIEGVSFIDVSVEKKSVVVEFDAPATQDLIKEALLDAGQEVV.

Positions 1-66 constitute an HMA domain; the sequence is MKATFQVPSI…ALLDAGQEVV (66 aa). Cu cation is bound by residues cysteine 12 and cysteine 15. Cysteine 12 and cysteine 15 are joined by a disulfide.

Functionally, part of a cation-transporting system which is associated with copper export out of the H.pylori cells. This is COP-associated protein (copP) from Helicobacter pylori (strain ATCC 700392 / 26695) (Campylobacter pylori).